The following is a 147-amino-acid chain: Hemoglobin subunit beta-1 (147 aa).

A Globin domain is found at 3–147 (EWTDKERSII…VVSALGKQYH (145 aa)). Positions 64 and 93 each coordinate heme b.

This sequence belongs to the globin family. Heterotetramer of two alpha chains and two beta chains. In terms of tissue distribution, red blood cells.

Involved in oxygen transport from gills to the various peripheral tissues. The protein is Hemoglobin subunit beta-1 (hbb1) of Pagothenia borchgrevinki (Bald rockcod).